A 131-amino-acid polypeptide reads, in one-letter code: Small ribosomal subunit protein bS18 (131 aa).

Polar residues predominate over residues 1-10 (MSNGTDSKTA). The disordered stretch occupies residues 1–60 (MSNGTDSKTASAPPARSGGGFGGGGSRGGDRGDRGDRGGDRGDRGGGLGGDDDKRGGGRG). The span at 17–27 (SGGGFGGGGSR) shows a compositional bias: gly residues. Residues 28–44 (GGDRGDRGDRGGDRGDR) are compositionally biased toward basic and acidic residues.

It belongs to the bacterial ribosomal protein bS18 family. As to quaternary structure, part of the 30S ribosomal subunit. Forms a tight heterodimer with protein bS6.

In terms of biological role, binds as a heterodimer with protein bS6 to the central domain of the 16S rRNA, where it helps stabilize the platform of the 30S subunit. This chain is Small ribosomal subunit protein bS18, found in Myxococcus xanthus (strain DK1622).